The sequence spans 523 residues: Dynein regulatory complex subunit 3 (523 aa).

5 LRR repeats span residues 44-65, 66-87, 88-109, 110-131, and 132-153; these read DVLS…WQFE, NLRK…ENLA, HLVW…DTLV, NLED…DALV, and KLQV…IYLR. The region spanning 166 to 204 is the LRRCT domain; sequence NPISEAEDYKMFICAYLPDLMYLDYRRIDDHTKKLAEAK. Coiled-coil stretches lie at residues 208 to 242 and 366 to 391; these read SIDE…AFVE and MTLE…VDMV.

It belongs to the DRC3 family. As to quaternary structure, component of the nexin-dynein regulatory complex (N-DRC). Interacts with DRC1. Interacts with TCTE1/DRC5. Interacts with DRC7.

The protein localises to the cytoplasm. Its subcellular location is the cytoskeleton. It is found in the cilium axoneme. It localises to the cell projection. The protein resides in the cilium. The protein localises to the flagellum axoneme. Its subcellular location is the flagellum. Component of the nexin-dynein regulatory complex (N-DRC) a key regulator of ciliary/flagellar motility which maintains the alignment and integrity of the distal axoneme and regulates microtubule sliding in motile axonemes. In Homo sapiens (Human), this protein is Dynein regulatory complex subunit 3 (DRC3).